Consider the following 247-residue polypeptide: Ribosomal RNA small subunit methyltransferase J (247 aa).

S-adenosyl-L-methionine is bound by residues 106–107, 122–123, and Asp-168; these read RD and ER.

It belongs to the methyltransferase superfamily. RsmJ family.

The protein resides in the cytoplasm. The catalysed reaction is guanosine(1516) in 16S rRNA + S-adenosyl-L-methionine = N(2)-methylguanosine(1516) in 16S rRNA + S-adenosyl-L-homocysteine + H(+). Functionally, specifically methylates the guanosine in position 1516 of 16S rRNA. In Alcanivorax borkumensis (strain ATCC 700651 / DSM 11573 / NCIMB 13689 / SK2), this protein is Ribosomal RNA small subunit methyltransferase J.